The primary structure comprises 291 residues: Quinol oxidase subunit 2 (291 aa).

The signal sequence occupies residues 1-28; it reads MQLKKAFWKLASLLPLSLLLFLGGCDKK. Helical transmembrane passes span 49–69 and 91–111; these read SFLL…VILI and LEII…IPTV.

The protein belongs to the cytochrome c oxidase subunit 2 family.

It is found in the cell membrane. It carries out the reaction 2 a quinol + O2 = 2 a quinone + 2 H2O. Catalyzes quinol oxidation with the concomitant reduction of oxygen to water. Subunit II transfers the electrons from a quinol to the binuclear center of the catalytic subunit I. The chain is Quinol oxidase subunit 2 from Bacillus anthracis.